The sequence spans 2304 residues: Protein Ycf2 (2304 aa).

Residue 1637-1644 (GSIGTGRS) coordinates ATP.

Belongs to the Ycf2 family.

It localises to the plastid. It is found in the chloroplast stroma. Functionally, probable ATPase of unknown function. Its presence in a non-photosynthetic plant (Epifagus virginiana) and experiments in tobacco indicate that it has an essential function which is probably not related to photosynthesis. The chain is Protein Ycf2 from Amborella trichopoda.